The following is a 160-amino-acid chain: Ureidoglycolate lyase (160 aa).

The protein belongs to the ureidoglycolate lyase family. Homodimer. It depends on Ni(2+) as a cofactor.

It catalyses the reaction (S)-ureidoglycolate = urea + glyoxylate. It functions in the pathway nitrogen metabolism; (S)-allantoin degradation. Its function is as follows. Catalyzes the catabolism of the allantoin degradation intermediate (S)-ureidoglycolate, generating urea and glyoxylate. Involved in the utilization of allantoin as nitrogen source. This chain is Ureidoglycolate lyase, found in Salmonella gallinarum (strain 287/91 / NCTC 13346).